The following is a 167-amino-acid chain: Crossover junction endodeoxyribonuclease RuvC (167 aa).

Residues Asp7, Glu67, and Asp139 contribute to the active site. Mg(2+) contacts are provided by Asp7, Glu67, and Asp139.

It belongs to the RuvC family. As to quaternary structure, homodimer which binds Holliday junction (HJ) DNA. The HJ becomes 2-fold symmetrical on binding to RuvC with unstacked arms; it has a different conformation from HJ DNA in complex with RuvA. In the full resolvosome a probable DNA-RuvA(4)-RuvB(12)-RuvC(2) complex forms which resolves the HJ. Requires Mg(2+) as cofactor.

The protein resides in the cytoplasm. It carries out the reaction Endonucleolytic cleavage at a junction such as a reciprocal single-stranded crossover between two homologous DNA duplexes (Holliday junction).. Functionally, the RuvA-RuvB-RuvC complex processes Holliday junction (HJ) DNA during genetic recombination and DNA repair. Endonuclease that resolves HJ intermediates. Cleaves cruciform DNA by making single-stranded nicks across the HJ at symmetrical positions within the homologous arms, yielding a 5'-phosphate and a 3'-hydroxyl group; requires a central core of homology in the junction. The consensus cleavage sequence is 5'-(A/T)TT(C/G)-3'. Cleavage occurs on the 3'-side of the TT dinucleotide at the point of strand exchange. HJ branch migration catalyzed by RuvA-RuvB allows RuvC to scan DNA until it finds its consensus sequence, where it cleaves and resolves the cruciform DNA. In Zymomonas mobilis subsp. mobilis (strain ATCC 31821 / ZM4 / CP4), this protein is Crossover junction endodeoxyribonuclease RuvC.